Here is a 167-residue protein sequence, read N- to C-terminus: MEVEVGQIVNTHGIKGEVKVKSNSDFTETRFQPGEQLLVKHNNTEIVYTVDSYRIHKGFHMLRFEGINNINDIEHLKGDYIYQERDHQDIELGEHEYYYSDIIGCTVFKDDDTPIGRVINIFETGANDVWIVKGEKEYLIPYIEDVVKDIDIENKTIKITPMEGLLD.

One can recognise a PRC barrel domain in the interval 94–165 (EHEYYYSDII…TIKITPMEGL (72 aa)).

Belongs to the RimM family. In terms of assembly, binds ribosomal protein uS19.

It is found in the cytoplasm. Its function is as follows. An accessory protein needed during the final step in the assembly of 30S ribosomal subunit, possibly for assembly of the head region. Essential for efficient processing of 16S rRNA. May be needed both before and after RbfA during the maturation of 16S rRNA. It has affinity for free ribosomal 30S subunits but not for 70S ribosomes. This is Ribosome maturation factor RimM from Staphylococcus epidermidis (strain ATCC 35984 / DSM 28319 / BCRC 17069 / CCUG 31568 / BM 3577 / RP62A).